Here is a 339-residue protein sequence, read N- to C-terminus: Deubiquitinase and deneddylase Dub2 (339 aa).

Residues 36–56 (IIIALFLIVISCGLILCAYTF) form a helical membrane-spanning segment. Catalysis depends on residues His203, Asp220, and Cys282.

It belongs to the peptidase C48 family.

The protein resides in the secreted. It localises to the host cell. It is found in the membrane. Functionally, effector proteins function to alter host cell physiology and promote bacterial survival in host tissues. This protease possesses deubiquitinating and deneddylating activities. The protein is Deubiquitinase and deneddylase Dub2 (cdu2) of Chlamydia trachomatis serovar D (strain ATCC VR-885 / DSM 19411 / UW-3/Cx).